The chain runs to 95 residues: Aspartyl/glutamyl-tRNA(Asn/Gln) amidotransferase subunit C (95 aa).

The protein belongs to the GatC family. As to quaternary structure, heterotrimer of A, B and C subunits.

The enzyme catalyses L-glutamyl-tRNA(Gln) + L-glutamine + ATP + H2O = L-glutaminyl-tRNA(Gln) + L-glutamate + ADP + phosphate + H(+). The catalysed reaction is L-aspartyl-tRNA(Asn) + L-glutamine + ATP + H2O = L-asparaginyl-tRNA(Asn) + L-glutamate + ADP + phosphate + 2 H(+). Its function is as follows. Allows the formation of correctly charged Asn-tRNA(Asn) or Gln-tRNA(Gln) through the transamidation of misacylated Asp-tRNA(Asn) or Glu-tRNA(Gln) in organisms which lack either or both of asparaginyl-tRNA or glutaminyl-tRNA synthetases. The reaction takes place in the presence of glutamine and ATP through an activated phospho-Asp-tRNA(Asn) or phospho-Glu-tRNA(Gln). The sequence is that of Aspartyl/glutamyl-tRNA(Asn/Gln) amidotransferase subunit C from Pseudomonas putida (strain ATCC 700007 / DSM 6899 / JCM 31910 / BCRC 17059 / LMG 24140 / F1).